The following is a 1844-amino-acid chain: ATPase family AAA domain-containing protein 5 (1844 aa).

S44 is modified (phosphoserine). Residue K127 forms a Glycyl lysine isopeptide (Lys-Gly) (interchain with G-Cter in SUMO2) linkage. Residues 178–199 (QPNTMTSLQNSKKVNPKQGTTK) are compositionally biased toward polar residues. Residues 178–204 (QPNTMTSLQNSKKVNPKQGTTKNDFKK) are disordered. Residues S219, S306, S311, S354, and S369 each carry the phosphoserine modification. The tract at residues 368–384 (KSNVVIQEEELELAVLE) is interaction with WDR48. Disordered stretches follow at residues 477-499 (KLKKKNKKTLDTGAIPGKNREGN), 580-623 (ESEA…NSQL), and 658-700 (KFTR…SKNI). Composition is skewed to polar residues over residues 580 to 592 (ESEASLLNVSTPK) and 599 to 608 (RISSTPTTET). Phosphoserine is present on residues S602, S614, and S621. Basic residues predominate over residues 664 to 673 (TPKKSKKKSN). Polar residues predominate over residues 685 to 700 (GFTSQIRKASNTSKNI). At S817 the chain carries Phosphoserine. Composition is skewed to basic and acidic residues over residues 987 to 1032 (LEAD…ELSK) and 1092 to 1106 (RQNLKGKRDEKHEDF). Disordered stretches follow at residues 987 to 1047 (LEAD…SKDS) and 1092 to 1118 (RQNLKGKRDEKHEDFSGGIDFKGSSDD). At S1116 the chain carries Phosphoserine. 1132-1139 (GPTGVGKT) serves as a coordination point for ATP. Disordered stretches follow at residues 1203-1235 (KKISSPKKVVTSPRKVPPPSPKSSGPKRALPPK) and 1272-1292 (ITQTKSTNATNSNVKDVGAEE). Residues 1272–1285 (ITQTKSTNATNSNV) show a composition bias toward polar residues. The short motif at 1428–1432 (LVCSE) is the LXCXE motif element. A disordered region spans residues 1591 to 1635 (SLSSVSSSSNAEESKTGDEESKARDKGNNPETKKSIPCPPKTTAG). A compositionally biased stretch (basic and acidic residues) spans 1602–1624 (EESKTGDEESKARDKGNNPETKK). Residues 1630–1719 (PKTTAGKKCS…AAAEALSFTK (90 aa)) are interaction with RAD51 and RFC5.

Belongs to the AAA ATPase family. As to quaternary structure, component of a heteropentameric replication factor ATAD5 RFC-like complex composed of one large subunit (ATAD5) and four small subunits (RFC2, RFC3, RFC4 and RFC5). Within the ATAD5 RFC-like complex, interacts with RFC2, RFC4 and RFC5. Within the ATAD5 RFC-like complex, interacts directly via-N terminal with RAD51; the interactions is enhanced under replication stress. Interacts with RB1 predominantly in G1 phase via its LXCXE motif. Interacts with RAD9A in growing cells. The interaction with RAD9A is reduced after exposure to DNA replication-inhibiting agents. Interacts with BRD4. Interacts with PCNA. Interacts with deubiquitinating enzyme USP1, and its associated factor, WDR48. ATR may stimulate the RAD9A dissociation.

It is found in the nucleus. Has an important role in DNA replication and in maintaining genome integrity during replication stress. Involved in a RAD9A-related damage checkpoint, a pathway that is important in determining whether DNA damage is compatible with cell survival or whether it requires cell elimination by apoptosis. Modulates the RAD9A interaction with BCL2 and thereby induces DNA damage-induced apoptosis. Promotes PCNA deubiquitination by recruiting the ubiquitin-specific protease 1 (USP1) and WDR48 thereby down-regulating the error-prone damage bypass pathway. As component of the ATAD5 RFC-like complex, regulates the function of the DNA polymerase processivity factor PCNA by unloading the ring-shaped PCNA homotrimer from DNA after replication during the S phase of the cell cycle. This seems to be dependent on its ATPase activity. Plays important roles in restarting stalled replication forks under replication stress, by unloading the PCNA homotrimer from DNA and recruiting RAD51 possibly through an ATR-dependent manner. Ultimately this enables replication fork regression, breakage, and eventual fork restart. Both the PCNA unloading activity and the interaction with WDR48 are required to efficiently recruit RAD51 to stalled replication forks. Promotes the generation of MUS81-mediated single-stranded DNA-associated breaks in response to replication stress, which is an alternative pathway to restart stalled/regressed replication forks. The protein is ATPase family AAA domain-containing protein 5 of Homo sapiens (Human).